The sequence spans 284 residues: Tropomyosin (284 aa).

The stretch at Met-1–Tyr-284 forms a coiled coil. Polar residues predominate over residues Asn-202–Glu-213. A disordered region spans residues Asn-202–Glu-223. Residues Ala-214–Glu-223 are compositionally biased toward basic and acidic residues.

Belongs to the tropomyosin family. Homodimer.

In terms of biological role, tropomyosin, in association with the troponin complex, plays a central role in the calcium dependent regulation of muscle contraction. The protein is Tropomyosin of Haliotis rufescens (California red abalone).